A 285-amino-acid polypeptide reads, in one-letter code: Small ribosomal subunit protein uS2 (285 aa).

The disordered stretch occupies residues glycine 231 to glutamate 285. Low complexity predominate over residues alanine 255–glutamate 285.

This sequence belongs to the universal ribosomal protein uS2 family.

This chain is Small ribosomal subunit protein uS2, found in Micrococcus luteus (strain ATCC 4698 / DSM 20030 / JCM 1464 / CCM 169 / CCUG 5858 / IAM 1056 / NBRC 3333 / NCIMB 9278 / NCTC 2665 / VKM Ac-2230) (Micrococcus lysodeikticus).